A 389-amino-acid polypeptide reads, in one-letter code: Glutaryl-CoA dehydrogenase (389 aa).

Residues R87 and N91 each contribute to the substrate site. FAD is bound by residues 126-129 (FGIT), S135, and 159-161 (WIS). S135 provides a ligand contact to substrate. Position 181 (S181) interacts with substrate. FAD is bound by residues R271, 281 to 284 (FQMN), R340, A344, and 367 to 371 (EGSAN). Catalysis depends on E367, which acts as the Proton acceptor. R385 is a binding site for substrate.

The protein belongs to the acyl-CoA dehydrogenase family. As to quaternary structure, homotetramer. It depends on FAD as a cofactor.

The enzyme catalyses glutaryl-CoA + A = (2E)-glutaconyl-CoA + AH2. It participates in aromatic compound metabolism; benzoyl-CoA degradation. With respect to regulation, inhibited by glutaconyl-CoA. Functionally, catalyzes the dehydrogenation of Glutaryl-CoA to glutaconyl-CoA. In Desulfococcus multivorans, this protein is Glutaryl-CoA dehydrogenase (Acd).